The primary structure comprises 167 residues: Dihydrofolate reductase (167 aa).

In terms of domain architecture, DHFR spans 1-162 (MFISMWAQDK…YPHRFQKWQK (162 aa)). NADP(+) contacts are provided by residues alanine 7 and 13–19 (LIGKDGL). Residue aspartate 27 coordinates substrate. 45 to 46 (KT) provides a ligand contact to NADP(+). Arginine 58 serves as a coordination point for substrate. NADP(+)-binding positions include 64-65 (TT) and 99-106 (GGSRIFQA). Threonine 117 provides a ligand contact to substrate.

The protein belongs to the dihydrofolate reductase family.

The enzyme catalyses (6S)-5,6,7,8-tetrahydrofolate + NADP(+) = 7,8-dihydrofolate + NADPH + H(+). Its pathway is cofactor biosynthesis; tetrahydrofolate biosynthesis; 5,6,7,8-tetrahydrofolate from 7,8-dihydrofolate: step 1/1. In terms of biological role, key enzyme in folate metabolism. Catalyzes an essential reaction for de novo glycine and purine synthesis, and for DNA precursor synthesis. The sequence is that of Dihydrofolate reductase (folA) from Enterococcus faecium (Streptococcus faecium).